A 360-amino-acid polypeptide reads, in one-letter code: WD repeat domain phosphoinositide-interacting protein 4 (360 aa).

7 WD repeats span residues 1–34 (MTQQ…IYNV), 40–84 (KGHL…IWDD), 92–128 (KEKL…VYSF), 133–174 (RKLF…LVDL), 183–222 (SAPF…LFDT), 227–266 (KLVE…IFAL), and 284–329 (GPMI…ICVD). Residues 231–234 (LRRG) carry the L/FRRG motif motif.

Belongs to the WD repeat PROPPIN family. Interacts with WIPI1. Interacts with WIPI2. Interacts with ATG2A and ATG2B. Interacts with ULK1. May interact with the PRKAA1, PRKAA2, PRKAB1 and PRKAG1 subunits of the AMPK kinase. May interact with NUDC. As to expression, ubiquitously expressed, with high expression in skeletal muscle and heart. Weakly expressed in liver and placenta. Expression is down-regulated in pancreatic and in kidney tumors.

It localises to the preautophagosomal structure. The protein localises to the cytoplasm. Activated upon amino-acid starvation. Functionally, component of the autophagy machinery that controls the major intracellular degradation process by which cytoplasmic materials are packaged into autophagosomes and delivered to lysosomes for degradation. Binds phosphatidylinositol 3-phosphate (PtdIns3P). Activated by the STK11/AMPK signaling pathway upon starvation, WDR45 is involved in autophagosome assembly downstream of WIPI2, regulating the size of forming autophagosomes. Together with WIPI1, promotes ATG2 (ATG2A or ATG2B)-mediated lipid transfer by enhancing ATG2-association with phosphatidylinositol 3-monophosphate (PI3P)-containing membranes. Probably recruited to membranes through its PtdIns3P activity. This Homo sapiens (Human) protein is WD repeat domain phosphoinositide-interacting protein 4 (WDR45).